Here is a 407-residue protein sequence, read N- to C-terminus: [Pyruvate dehydrogenase (acetyl-transferring)] kinase isozyme 2, mitochondrial (407 aa).

Residues 135–364 (LEYKDTYGDD…DAVIYLKALS (230 aa)) enclose the Histidine kinase domain. Phosphotyrosine occurs at positions 215 and 216. ATP is bound by residues 251 to 258 (ELFKNAMR), Asp-290, 309 to 310 (ST), and 325 to 330 (GFGYGL). At Lys-376 the chain carries N6-succinyllysine.

The protein belongs to the PDK/BCKDK protein kinase family. As to quaternary structure, homodimer, and heterodimer with PDK1. Interacts with the pyruvate dehydrogenase complex subunit DLAT, and is part of the multimeric pyruvate dehydrogenase complex that contains multiple copies of pyruvate dehydrogenase (E1), dihydrolipoamide acetyltransferase (DLAT, E2) and lipoamide dehydrogenase (DLD, E3). As to expression, expressed in many tissues, with the highest level in heart and skeletal muscle, intermediate levels in brain, kidney, pancreas and liver, and low levels in placenta and lung.

It localises to the mitochondrion matrix. The catalysed reaction is L-seryl-[pyruvate dehydrogenase E1 alpha subunit] + ATP = O-phospho-L-seryl-[pyruvate dehydrogenase E1 alpha subunit] + ADP + H(+). Activity is enhanced by binding to the pyruvate dehydrogenase subunit DLAT. Inhibited by ADP and pyruvate; these compounds interfere with DLAT binding and thereby inhibit kinase activity. Inhibited by dichloroacetate. Inhibited by AZD7545; this compound interferes with DLAT binding and thereby inhibits kinase activity. In terms of biological role, kinase that plays a key role in the regulation of glucose and fatty acid metabolism and homeostasis via phosphorylation of the pyruvate dehydrogenase subunits PDHA1 and PDHA2. This inhibits pyruvate dehydrogenase activity, and thereby regulates metabolite flux through the tricarboxylic acid cycle, down-regulates aerobic respiration and inhibits the formation of acetyl-coenzyme A from pyruvate. Inhibition of pyruvate dehydrogenase decreases glucose utilization and increases fat metabolism. Mediates cellular responses to insulin. Plays an important role in maintaining normal blood glucose levels and in metabolic adaptation to nutrient availability. Via its regulation of pyruvate dehydrogenase activity, plays an important role in maintaining normal blood pH and in preventing the accumulation of ketone bodies under starvation. Plays a role in the regulation of cell proliferation and in resistance to apoptosis under oxidative stress. Plays a role in p53/TP53-mediated apoptosis. This Homo sapiens (Human) protein is [Pyruvate dehydrogenase (acetyl-transferring)] kinase isozyme 2, mitochondrial (PDK2).